The sequence spans 1050 residues: FHIP family protein GE18198 (1050 aa).

Phosphoserine is present on residues Ser498 and Ser805. Disordered regions lie at residues 800–827, 865–888, 911–954, and 968–995; these read KGNEGSPMHHSQQQQMATNSGQQQGQLR, TSMFSRKSASNTSTTPPNGSSASS, TDGR…SGSN, and SNTTTHSASTLHGLDGGPSTGGFNSEPA. A compositionally biased stretch (polar residues) spans 808 to 826; it reads HHSQQQQMATNSGQQQGQL. The span at 872-888 shows a compositional bias: low complexity; that stretch reads SASNTSTTPPNGSSASS. The segment covering 918–935 has biased composition (polar residues); the sequence is HAQTSAGTCETSLSTQPQ. The segment covering 941-954 has biased composition (low complexity); that stretch reads TGAIATSATASGSN. Over residues 968 to 977 the composition is skewed to polar residues; sequence SNTTTHSAST.

This sequence belongs to the FHIP family.

In Drosophila yakuba (Fruit fly), this protein is FHIP family protein GE18198.